The sequence spans 120 residues: U13-lycotoxin-Ls1f (120 aa).

The signal sequence occupies residues 1–19; sequence MKILFVLISILYAVYRFSS. Residues 20–54 constitute a propeptide that is removed on maturation; the sequence is EEDVDSAYLANELEPVEDINSEQYAALEPKEEQER. Cystine bridges form between Cys-56/Cys-70, Cys-63/Cys-76, Cys-69/Cys-87, and Cys-78/Cys-85. One can recognise an Agouti domain in the interval 56–95; it reads CAGMGQDCKDDCDCCLNIATCNCWFGRYFCSCTFGDYQTC.

Belongs to the neurotoxin 05 (agouti) family. Post-translationally, contains 6 disulfide bonds. Expressed by the venom gland.

Its subcellular location is the secreted. This is U13-lycotoxin-Ls1f from Lycosa singoriensis (Wolf spider).